The sequence spans 125 residues: Phosphoribosyl-AMP cyclohydrolase (125 aa).

Asp74 contacts Mg(2+). Cys75 is a Zn(2+) binding site. Positions 76 and 78 each coordinate Mg(2+). Residues Cys92 and Cys99 each contribute to the Zn(2+) site.

The protein belongs to the PRA-CH family. As to quaternary structure, homodimer. Mg(2+) serves as cofactor. Requires Zn(2+) as cofactor.

Its subcellular location is the cytoplasm. It carries out the reaction 1-(5-phospho-beta-D-ribosyl)-5'-AMP + H2O = 1-(5-phospho-beta-D-ribosyl)-5-[(5-phospho-beta-D-ribosylamino)methylideneamino]imidazole-4-carboxamide. It participates in amino-acid biosynthesis; L-histidine biosynthesis; L-histidine from 5-phospho-alpha-D-ribose 1-diphosphate: step 3/9. Functionally, catalyzes the hydrolysis of the adenine ring of phosphoribosyl-AMP. The chain is Phosphoribosyl-AMP cyclohydrolase from Geobacter metallireducens (strain ATCC 53774 / DSM 7210 / GS-15).